The following is a 178-amino-acid chain: Bifunctional protein PyrR (178 aa).

The short motif at 99–111 (VILVDDVLFTGRT) is the PRPP-binding element.

Belongs to the purine/pyrimidine phosphoribosyltransferase family. PyrR subfamily. As to quaternary structure, homodimer and homohexamer; in equilibrium.

It carries out the reaction UMP + diphosphate = 5-phospho-alpha-D-ribose 1-diphosphate + uracil. Functionally, regulates transcriptional attenuation of the pyrimidine nucleotide (pyr) operon by binding in a uridine-dependent manner to specific sites on pyr mRNA. This disrupts an antiterminator hairpin in the RNA and favors formation of a downstream transcription terminator, leading to a reduced expression of downstream genes. Its function is as follows. Also displays a weak uracil phosphoribosyltransferase activity which is not physiologically significant. This chain is Bifunctional protein PyrR, found in Ligilactobacillus salivarius (strain UCC118) (Lactobacillus salivarius).